The chain runs to 493 residues: NADH-quinone oxidoreductase subunit N 2 (493 aa).

14 helical membrane passes run 16-36 (IIPAVMLALFGCAILLFDFLI), 45-65 (FLLIFVVLAEAFTGFGLFRQQ), 87-107 (GFAIFFNWIFLVAAVVVAIVS), 119-139 (GEYYSLILFAQCGMYFLATGT), 141-161 (LITLFIGLELMALCFYVMVGF), 176-196 (LLLGAFSSGFLVYGFSVMYGI), 219-239 (VFLALSTTSVGLLFKVSAVPF), 258-278 (LSVASKAASIAFLLRIFLGPL), 285-305 (WEPLLAFIAIITLTIGNLAAI), 313-333 (LLAYSSISHAGYMLLGLVAGN), 340-360 (IAVYVMVYTFMNLGAFLVIIA), 385-405 (AFLMLIFLLSLAGIPPTAGFL), 421-441 (GLAIVATLYVAVAIYYYFKIV), and 464-484 (CALALTGIATLAIGIYPEPFL).

The protein belongs to the complex I subunit 2 family. In terms of assembly, NDH-1 is composed of 14 different subunits. Subunits NuoA, H, J, K, L, M, N constitute the membrane sector of the complex.

Its subcellular location is the cell inner membrane. The enzyme catalyses a quinone + NADH + 5 H(+)(in) = a quinol + NAD(+) + 4 H(+)(out). In terms of biological role, NDH-1 shuttles electrons from NADH, via FMN and iron-sulfur (Fe-S) centers, to quinones in the respiratory chain. The immediate electron acceptor for the enzyme in this species is believed to be ubiquinone. Couples the redox reaction to proton translocation (for every two electrons transferred, four hydrogen ions are translocated across the cytoplasmic membrane), and thus conserves the redox energy in a proton gradient. This chain is NADH-quinone oxidoreductase subunit N 2, found in Solibacter usitatus (strain Ellin6076).